Here is a 468-residue protein sequence, read N- to C-terminus: H(+)/Cl(-) exchange transporter ClcA (468 aa).

Topologically, residues Met1–Ser32 are cytoplasmic. The helical transmembrane segment at Phe33–Lys69 threads the bilayer. Topologically, residues Ser70–Leu76 are periplasmic. Residues Pro77–Phe100 traverse the membrane as a helical segment. The Selectivity filter part_1 signature appears at Gly106–Pro110. Ser107 contacts chloride. Residues Ile109–Met116 constitute an intramembrane region (helical). The Cytoplasmic segment spans residues Asp117 to Arg123. The next 2 helical transmembrane spans lie at Trp124–Ser141 and Glu148–Phe166. Residues Gly146–Pro150 carry the Selectivity filter part_2 motif. The Cytoplasmic portion of the chain corresponds to Arg167–Ser176. 2 intramembrane regions (helical) span residues Leu177 to Ala189 and Pro193 to Val201. Residues Glu202–Ser214 are Cytoplasmic-facing. The chain crosses the membrane as a helical span at residues Ile215 to Ile232. At Asn233–Leu252 the chain is on the periplasmic side. Residues Trp253–Val281 form a helical membrane-spanning segment. Residues Ala282–Asp287 are Cytoplasmic-facing. The chain crosses the membrane as a helical span at residues Arg288–Val309. At Pro310–Ser329 the chain is on the periplasmic side. 2 consecutive transmembrane segments (helical) span residues Ile330–Gly349 and Gly355–Asp376. A Selectivity filter part_3 motif is present at residues Gly355–Pro359. Chloride contacts are provided by Ile356 and Phe357. Residues Met377–Pro386 are Periplasmic-facing. Positions Gly387–Thr401 form an intramembrane region, helical. Positions Val402–Ala404 form an intramembrane region, note=Loop between two helices. Positions Pro405–Thr416 form an intramembrane region, helical. The segment at residues Asn417 to Leu421 is an intramembrane region (note=Loop between two helices). Residues Ile422–Leu438 traverse the membrane as a helical segment. At Leu439–Ala468 the chain is on the cytoplasmic side. Residue Tyr445 participates in chloride binding.

The protein belongs to the chloride channel (TC 2.A.49) family. ClcA subfamily. Homodimer.

The protein localises to the cell inner membrane. It catalyses the reaction 2 chloride(in) + H(+)(out) = 2 chloride(out) + H(+)(in). Proton-coupled chloride transporter. Functions as antiport system and exchanges two chloride ions for 1 proton. Probably acts as an electrical shunt for an outwardly-directed proton pump that is linked to amino acid decarboxylation, as part of the extreme acid resistance (XAR) response. This Vibrio campbellii (strain ATCC BAA-1116) protein is H(+)/Cl(-) exchange transporter ClcA.